A 208-amino-acid chain; its full sequence is Small ribosomal subunit protein uS4 (208 aa).

The 61-residue stretch at 98–158 (RRLDNIAYRL…EKSRKVACIN (61 aa)) folds into the S4 RNA-binding domain.

It belongs to the universal ribosomal protein uS4 family. Part of the 30S ribosomal subunit. Contacts protein S5. The interaction surface between S4 and S5 is involved in control of translational fidelity.

Functionally, one of the primary rRNA binding proteins, it binds directly to 16S rRNA where it nucleates assembly of the body of the 30S subunit. With S5 and S12 plays an important role in translational accuracy. This chain is Small ribosomal subunit protein uS4, found in Geotalea uraniireducens (strain Rf4) (Geobacter uraniireducens).